Reading from the N-terminus, the 383-residue chain is Protein COS5 (383 aa).

The Cytoplasmic portion of the chain corresponds to 1–42; the sequence is MKENELKNEKSVDVLSFKQLESQKIVLPQDLFRSSFTWFCYE. A helical transmembrane segment spans residues 43–63; that stretch reads IYKSLAFPIWMLLWLPLSVWW. The Extracellular portion of the chain corresponds to 64-72; that stretch reads KLSNNCIYP. The chain crosses the membrane as a helical span at residues 73 to 93; it reads LIVSLLVLFLGPIFVLVICGL. The Cytoplasmic portion of the chain corresponds to 94-232; sequence SRKRSLSKQL…RSKLTWFLKR (139 aa). A helical transmembrane segment spans residues 233–253; it reads IFTIYSLPLWLAFLNCICVSQ. Position 254 (H254) is a topological domain, extracellular. The helical transmembrane segment at 255-275 threads the bilayer; that stretch reads FCLAFRILCPGLFFLMMVWLF. The Cytoplasmic portion of the chain corresponds to 276–383; sequence QNMRTTALLV…SRNEESLMKK (108 aa).

This sequence belongs to the DUP/COS family.

Its subcellular location is the membrane. This chain is Protein COS5 (COS5), found in Saccharomyces cerevisiae (strain ATCC 204508 / S288c) (Baker's yeast).